We begin with the raw amino-acid sequence, 2549 residues long: Serine/threonine-protein kinase mTOR (2549 aa).

The residue at position 1 (Met-1) is an N-acetylmethionine. The tract at residues 1–651 is interaction with NBN; the sequence is MLGTGPAAAT…HVVSQTAVQV (651 aa). HEAT repeat units lie at residues 16 to 53, 55 to 99, 100 to 137, 138 to 179, 180 to 220, 222 to 276, 277 to 313, 314 to 364, 365 to 409, 410 to 445, 446 to 494, 495 to 529, 530 to 563, 564 to 596, 597 to 636, 637 to 683, 686 to 724, 727 to 766, 769 to 811, 814 to 853, 857 to 893, 894 to 942, 943 to 988, 989 to 1027, 1029 to 1068, 1069 to 1105, 1106 to 1144, 1145 to 1188, 1189 to 1225, 1226 to 1273, 1274 to 1311, and 1312 to 1345; these read SSNVSVLQQFASGLKSRNEETRAKAAKELQHYVTMELR, MSQE…VEGG, NATRIGRFANYLRNLLPSNDPVVMEMASKAIGRLAMAG, DTFT…AISV, PTFF…LILT, QREP…RISS, MEGERLREEMEEITQQQLVHDKYCKDLMGFGTKPRHI, TPFT…CCRD, LMEE…AFTD, TQYLQDTMNHVLSCVKKEKERTAAFQALGLLSVAVR, SEFK…RAMG, PGIQQDIKELLEPMLAVGLSPALTAVLYDLSRQIP, QLKKDIQDGLLKMLSLVLMHKPLRHPGMPKGLAH, QLASPGLTTLPEASDVGSITLALRTLGSFEFEG, HSLTQFVRHCADHFLNSEHKEIRMEAARTCSRLLTPSIHL, ISGH…DERF, HLAQAENLQALFVALNDQVFEIRELAICTVGRLSSMNPA, MPFLRKMLIQILTELEHSGIGRIKEQSARMLGHLVSNAPR, RPYM…VSGL, RKWVDELFIIIMDMLQDSSLLAKRQVALWTLGQLVASTGY, PYRKYPTLLEVLLNFLKTEQNQGTRREAIRVLGLLGA, LDPY…GNLP, LDEF…KCVQ, FLPQVMPTFLNVIRVCDGAIREFLFQQLGMLVSFVKSHI, PYMDEIVTLMREFWVMNTSIQSTIILLIEQIVVALGGEFK, LYLPQLIPHMLRVFMHDNSPGRIVSIKLLAAIQLFGA, NLDDYLHLLLPPIVKLFDAPEAPLPSRKAALETVDRLTE, SLDF…GKKY, QIFIPMVNKVLVRHRINHQRYDVLICRIVKGYTLADE, EEDP…GAAR, RVSKDDWLEWLRRLSLELLKDSSSPSLRSCWALAQAYN, and PMARDLFNAAFVSCWSELNEDQQDELIRSIELAL. Phosphoserine is present on Ser-567. Thr-1162 carries the phosphothreonine modification. Lys-1218 carries the post-translational modification N6-acetyllysine. Ser-1261 is modified (phosphoserine). 16 TPR repeats span residues 1346 to 1382, 1383 to 1408, 1409 to 1442, 1443 to 1473, 1474 to 1507, 1508 to 1541, 1542 to 1574, 1575 to 1614, 1615 to 1649, 1650 to 1693, 1694 to 1731, 1732 to 1786, 1787 to 1846, 1898 to 1930, 1931 to 1970, and 1971 to 2005; these read TSQDIAEVTQTLLNLAEFMEHSDKGPLPLRDDNGIVL, LGERAAKCRAYAKALHYKELEFQKGP, TPAILESLISINNKLQQPEAAAGVLEYAMKHFGE, LEIQATWYEKLHEWEDALVAYDKKMDTNKDD, PELMLGRMRCLEALGEWGQLHQQCCEKWTLVNDE, TQAKMARMAAAAAWGLGQWDSMEEYTCMIPRDTH, DGAFYRAVLALHQDLFSLAQQCIDKARDLLDAE, LTAMAGESYSRAYGAMVSCHMLSELEEVIQYKLVPERREI, IRQIWWERLQGCQRIVEDWQKILMVRSLVVSPHED, MRTW…PTVH, PQVTYAYMKNMWKSARKIDAFQHMQHFVQTMQQQAQHA, IATE…DRSW, YKAW…STEG, NNLQDTLRVLTLWFDYGHWPDVNEALVEGVKAI, QIDTWLQVIPQLIARIDTPRPLVGRLIHQLLTDIGRYHPQ, and ALIYPLTVASKSTTTARHNAANKILKNMCEHSNTL. An FAT domain is found at 1382–1982; that stretch reads LLGERAAKCR…IYPLTVASKS (601 aa). Residues Lys-1662, Lys-1702, and Arg-1749 each contribute to the 1D-myo-inositol hexakisphosphate site. A disordered region spans residues 1812 to 1867; that stretch reads DEKKKLRHASGANITNATTAATTAATATTTASTEGSNSESEAESTENSPTPSPLQK. The span at 1820 to 1860 shows a compositional bias: low complexity; sequence ASGANITNATTAATTAATATTTASTEGSNSESEAESTENSP. A sufficient for interaction with the FKBP1A/rapamycin complex region spans residues 2012-2144; that stretch reads VSEELIRVAI…DLELAVPGTY (133 aa). Lys-2066 participates in a covalent cross-link: Glycyl lysine isopeptide (Lys-Gly) (interchain with G-Cter in ubiquitin). A PI3K/PI4K catalytic domain is found at 2156–2469; the sequence is IAPSLQVITS…GVELGEPAHK (314 aa). Position 2159 is a phosphoserine; by TBK1 (Ser-2159). A G-loop region spans residues 2162 to 2168; that stretch reads VITSKQR. Thr-2164 bears the Phosphothreonine mark. Ser-2165 and Gln-2167 together coordinate ATP. At Thr-2173 the chain carries Phosphothreonine; by PKB/AKT1. Residues Leu-2185, Lys-2187, Glu-2190, Tyr-2225, Gly-2238, Trp-2239, Val-2240, and Thr-2245 each contribute to the ATP site. The interaction with MLST8 stretch occupies residues 2258-2296; the sequence is KILLNIEHRIMLRMAPDYDHLTLMQKVEVFEHAVNNTAG. A catalytic loop region spans residues 2335-2343; the sequence is GLGDRHPSN. Asn-2343 is a Mg(2+) binding site. ATP is bound by residues Met-2345 and Ile-2356. The interval 2355 to 2380 is activation loop; it reads HIDFGDCFEVAMTREKFPEKIPFRLT. Residue Asp-2357 participates in Mg(2+) binding. The residue at position 2446 (Thr-2446) is a Phosphothreonine; by RPS6KB1. Ser-2448 carries the phosphoserine; by RPS6KB1 modification. Ser-2478 is modified (phosphoserine). Position 2481 is a phosphoserine; by autocatalysis (Ser-2481). In terms of domain architecture, FATC spans 2517–2549; sequence DTLDVPTQVELLIKQATSHENLCQCYIGWCPFW.

It belongs to the PI3/PI4-kinase family. Part of the mechanistic target of rapamycin complex 1 (mTORC1) which contains MTOR, MLST8 and RPTOR. The mTORC1 complex is a 1 Md obligate dimer of two stoichiometric heterotetramers with overall dimensions of 290 A x 210 A x 135 A. It has a rhomboid shape and a central cavity, the dimeric interfaces are formed by interlocking interactions between the two MTOR and the two RPTOR subunits. The MLST8 subunit forms distal foot-like protuberances, and contacts only one MTOR within the complex, while the small AKT1S1/PRAS40 localizes to the midsection of the central core, in close proximity to RPTOR. mTORC1 associates with AKT1S1/PRAS40, which inhibits its activity by blocking MTOR substrate-recruitment site. Component of the mechanistic target of rapamycin complex 2 (mTORC2), consisting in two heterotretramers composed of MTOR, MLST8, RICTOR and MAPKAP1/SIN1. Interacts with PLPP7 and PML. Interacts with PRR5 and RICTOR; the interaction is direct within the mTORC2 complex and interaction with RICTOR is enhanced by deubiquitination of RICTOR by USP9X. mTORC1 and mTORC2 associate with DEPTOR, which regulates their activity. Interacts with WAC; WAC positively regulates MTOR activity by promoting the assembly of the TTT complex composed of TELO2, TTI1 and TTI2 and the RUVBL complex composed of RUVBL1 and RUVBL2 into the TTT-RUVBL complex which leads to the dimerization of the mTORC1 complex and its subsequent activation. Interacts with UBQLN1. Interacts with TTI1 and TELO2. Interacts with CLIP1; phosphorylates and regulates CLIP1. Interacts with NBN. Interacts with HTR6. Interacts with BRAT1. Interacts with MEAK7 (via C-terminal domain); the interaction increases upon nutrient stimulation. Interacts with TM4SF5; the interaction is positively regulated by arginine and is negatively regulated by leucine. Interacts with GPR137B. Interacts with NCKAP1L. Interacts with TPCN1 and TPCN2; the interaction is required for TPCN1 and TPCN2 sensitivity to ATP. Interacts with ATP6V1A and with CRYAB, forming a ternary complex. Interacts with SLC38A7; this interaction mediates the recruitment of mTORC1 to the lysosome and its subsequent activation. Interacts with TSPAN8. Autophosphorylates when part of mTORC1 or mTORC2. Phosphorylation at Ser-1261, Ser-2159 and Thr-2164 promotes autophosphorylation. Phosphorylated at Ser-2448 by RPS6KB1. Phosphorylation in the kinase domain modulates the interactions of MTOR with RPTOR and AKT1S1/PRAS40 and leads to increased intrinsic mTORC1 kinase activity. Phosphorylation at Ser-2159 by TBK1 in response to growth factors and pathogen recognition receptors promotes mTORC1 activity. Phosphorylation at Ser-2159 by TBK1 in response to EGF growth factor promotes mTORC2 activity, leading to AKT1 phosphorylation and activation. Phosphorylation at Thr-2173 in the ATP-binding region by AKT1 strongly reduces kinase activity. In terms of processing, ubiquitinated at Lys-2066 by the SCF(FBXO22) complex via 'Lys-27'-linked ubiquitination prevents mTORC1 substrate recruitment. Expressed in numerous tissues, with highest levels in testis.

Its subcellular location is the lysosome membrane. The protein localises to the endoplasmic reticulum membrane. It is found in the golgi apparatus membrane. The protein resides in the cell membrane. It localises to the mitochondrion outer membrane. Its subcellular location is the cytoplasm. The protein localises to the nucleus. It is found in the PML body. The protein resides in the microsome membrane. It localises to the cytoplasmic vesicle. Its subcellular location is the phagosome. The enzyme catalyses L-seryl-[protein] + ATP = O-phospho-L-seryl-[protein] + ADP + H(+). The catalysed reaction is L-threonyl-[protein] + ATP = O-phospho-L-threonyl-[protein] + ADP + H(+). It carries out the reaction L-tyrosyl-[protein] + ATP = O-phospho-L-tyrosyl-[protein] + ADP + H(+). With respect to regulation, the mTORC1 complex is activated in response to nutrients, growth factors or amino acids: activation requires relocalization of the mTORC1 complex to lysosomes that is mediated by the Ragulator complex, SLC38A9, and the Rag GTPases RagA/RRAGA, RagB/RRAGB, RagC/RRAGC and RagD/RRAGD. Activation of mTORC1 by growth factors such as insulin involves AKT1-mediated phosphorylation of TSC1-TSC2, which leads to the activation of the RHEB GTPase a potent activator of the protein kinase activity of mTORC1. Insulin-stimulated and amino acid-dependent phosphorylation at Ser-1261 promotes autophosphorylation and the activation of mTORC1. On the other hand, low cellular energy levels can inhibit mTORC1 through activation of PRKAA1 while hypoxia inhibits mTORC1 through a REDD1-dependent mechanism which may also require PRKAA1. The kinase activity of MTOR within the mTORC1 complex is positively regulated by MLST8. The kinase activity of MTOR is inhibited by DEPTOR and AKT1S1. The non-canonical mTORC1 complex is independent of the RHEB GTPase and specifically mediates phosphorylation of MiT/TFE factors TFEB and TFE3 but not other mTORC1 substrates: it is activated by FLCN, which activates Rag GTPases RagC/RRAGC and RagD/RRAGD. MTOR is the target of the immunosuppressive and anti-cancer drug rapamycin which acts in complex with FKBP1A/FKBP12, and specifically inhibits its kinase activity. mTORC2 is also activated by growth factors, but seems to be nutrient-insensitive. mTORC2 associates and is directly activated by ribosomes. mTORC2 may also be regulated by RHEB but in an indirect manner through the PI3K signaling pathway. Its function is as follows. Serine/threonine protein kinase which is a central regulator of cellular metabolism, growth and survival in response to hormones, growth factors, nutrients, energy and stress signals. MTOR directly or indirectly regulates the phosphorylation of at least 800 proteins. Functions as part of 2 structurally and functionally distinct signaling complexes mTORC1 and mTORC2 (mTOR complex 1 and 2). In response to nutrients, growth factors or amino acids, mTORC1 is recruited to the lysosome membrane and promotes protein, lipid and nucleotide synthesis by phosphorylating key regulators of mRNA translation and ribosome synthesis. This includes phosphorylation of EIF4EBP1 and release of its inhibition toward the elongation initiation factor 4E (eiF4E). Moreover, phosphorylates and activates RPS6KB1 and RPS6KB2 that promote protein synthesis by modulating the activity of their downstream targets including ribosomal protein S6, eukaryotic translation initiation factor EIF4B, and the inhibitor of translation initiation PDCD4. Stimulates the pyrimidine biosynthesis pathway, both by acute regulation through RPS6KB1-mediated phosphorylation of the biosynthetic enzyme CAD, and delayed regulation, through transcriptional enhancement of the pentose phosphate pathway which produces 5-phosphoribosyl-1-pyrophosphate (PRPP), an allosteric activator of CAD at a later step in synthesis, this function is dependent on the mTORC1 complex. Regulates ribosome synthesis by activating RNA polymerase III-dependent transcription through phosphorylation and inhibition of MAF1 an RNA polymerase III-repressor. Activates dormant ribosomes by mediating phosphorylation of SERBP1, leading to SERBP1 inactivation and reactivation of translation. In parallel to protein synthesis, also regulates lipid synthesis through SREBF1/SREBP1 and LPIN1. To maintain energy homeostasis mTORC1 may also regulate mitochondrial biogenesis through regulation of PPARGC1A. In the same time, mTORC1 inhibits catabolic pathways: negatively regulates autophagy through phosphorylation of ULK1. Under nutrient sufficiency, phosphorylates ULK1 at 'Ser-758', disrupting the interaction with AMPK and preventing activation of ULK1. Also prevents autophagy through phosphorylation of the autophagy inhibitor DAP. Also prevents autophagy by phosphorylating RUBCNL/Pacer under nutrient-rich conditions. Prevents autophagy by mediating phosphorylation of AMBRA1, thereby inhibiting AMBRA1 ability to mediate ubiquitination of ULK1 and interaction between AMBRA1 and PPP2CA. mTORC1 exerts a feedback control on upstream growth factor signaling that includes phosphorylation and activation of GRB10 a INSR-dependent signaling suppressor. Among other potential targets mTORC1 may phosphorylate CLIP1 and regulate microtubules. The mTORC1 complex is inhibited in response to starvation and amino acid depletion. The non-canonical mTORC1 complex, which acts independently of RHEB, specifically mediates phosphorylation of MiT/TFE factors MITF, TFEB and TFE3 in the presence of nutrients, promoting their cytosolic retention and inactivation. Upon starvation or lysosomal stress, inhibition of mTORC1 induces dephosphorylation and nuclear translocation of TFEB and TFE3, promoting their transcription factor activity. The mTORC1 complex regulates pyroptosis in macrophages by promoting GSDMD oligomerization. MTOR phosphorylates RPTOR which in turn inhibits mTORC1. As part of the mTORC2 complex, MTOR transduces signals from growth factors to pathways involved in proliferation, cytoskeletal organization, lipogenesis and anabolic output. In response to growth factors, mTORC2 phosphorylates and activates AGC protein kinase family members, including AKT (AKT1, AKT2 and AKT3), PKC (PRKCA, PRKCB and PRKCE) and SGK1. In contrast to mTORC1, mTORC2 is nutrient-insensitive. mTORC2 plays a critical role in AKT1 activation by mediating phosphorylation of different sites depending on the context, such as 'Thr-450', 'Ser-473', 'Ser-477' or 'Thr-479', facilitating the phosphorylation of the activation loop of AKT1 on 'Thr-308' by PDPK1/PDK1 which is a prerequisite for full activation. mTORC2 also regulates the phosphorylation of SGK1 at 'Ser-422'. mTORC2 may regulate the actin cytoskeleton, through phosphorylation of PRKCA, PXN and activation of the Rho-type guanine nucleotide exchange factors RHOA and RAC1A or RAC1B. The mTORC2 complex also phosphorylates various proteins involved in insulin signaling, such as FBXW8 and IGF2BP1. May also regulate insulin signaling by acting as a tyrosine protein kinase that catalyzes phosphorylation of IGF1R and INSR; additional evidence are however required to confirm this result in vivo. Regulates osteoclastogenesis by adjusting the expression of CEBPB isoforms. Plays an important regulatory role in the circadian clock function; regulates period length and rhythm amplitude of the suprachiasmatic nucleus (SCN) and liver clocks. In Homo sapiens (Human), this protein is Serine/threonine-protein kinase mTOR.